Reading from the N-terminus, the 245-residue chain is Nucleoprotein (245 aa).

Residues Tyr-30, Lys-67, Arg-106, Arg-186, and Ser-196 each coordinate RNA.

This sequence belongs to the phlebovirus nucleocapsid protein family. As to quaternary structure, homodimer. Homohexamer; ring-shaped, necessary to form the nucleocapsid. Homopentamers; opened pentamers in solution. Binds to viral genomic RNA. Interacts with glycoprotein Gn; this interaction allows packaging of nucleocapsids into virions.

It is found in the virion. It localises to the host cytoplasm. The protein localises to the host nucleus. Its subcellular location is the host endoplasmic reticulum-Golgi intermediate compartment. The protein resides in the host Golgi apparatus. Encapsidates the genomic RNA, protecting it from nucleases. Displays high affinity for single-stranded nucleic acid. The encapsidated genomic RNA is termed the nucleocapsid (NC) or ribonucleoprotein. The ribonucleoprotein has a non-helical structure. Serves as template for viral transcription and replication. After replication, the nucleocapsid is recruited to the host Golgi apparatus by glycoprotein Gn for packaging into virus particles. The polypeptide is Nucleoprotein (NP) (Dabie bandavirus (Severe fever with thrombocytopenia virus)).